A 637-amino-acid polypeptide reads, in one-letter code: 3D-(3,5/4)-trihydroxycyclohexane-1,2-dione hydrolase (637 aa).

Residue Glu66 participates in thiamine diphosphate binding. Positions 442–522 (SLPGDLQRLW…INVLLFDNSG (81 aa)) are thiamine pyrophosphate binding. Asp493 and Asn520 together coordinate Mg(2+).

It belongs to the TPP enzyme family. Mg(2+) serves as cofactor. Requires thiamine diphosphate as cofactor.

It carries out the reaction 3D-3,5/4-trihydroxycyclohexane-1,2-dione + H2O = 5-deoxy-D-glucuronate + H(+). It functions in the pathway polyol metabolism; myo-inositol degradation into acetyl-CoA; acetyl-CoA from myo-inositol: step 3/7. Its function is as follows. Involved in the cleavage of the C1-C2 bond of 3D-(3,5/4)-trihydroxycyclohexane-1,2-dione (THcHDO) to yield 5-deoxy-glucuronate (5DG). This chain is 3D-(3,5/4)-trihydroxycyclohexane-1,2-dione hydrolase (iolD), found in Bacillus subtilis (strain 168).